A 197-amino-acid polypeptide reads, in one-letter code: UPF0301 protein Adeh_3962 (197 aa).

It belongs to the UPF0301 (AlgH) family.

This chain is UPF0301 protein Adeh_3962, found in Anaeromyxobacter dehalogenans (strain 2CP-C).